Consider the following 466-residue polypeptide: 3-isopropylmalate dehydratase large subunit (466 aa).

Residues Cys-347, Cys-407, and Cys-410 each contribute to the [4Fe-4S] cluster site.

The protein belongs to the aconitase/IPM isomerase family. LeuC type 1 subfamily. As to quaternary structure, heterodimer of LeuC and LeuD. [4Fe-4S] cluster is required as a cofactor.

The enzyme catalyses (2R,3S)-3-isopropylmalate = (2S)-2-isopropylmalate. The protein operates within amino-acid biosynthesis; L-leucine biosynthesis; L-leucine from 3-methyl-2-oxobutanoate: step 2/4. Functionally, catalyzes the isomerization between 2-isopropylmalate and 3-isopropylmalate, via the formation of 2-isopropylmaleate. In Salmonella paratyphi A (strain ATCC 9150 / SARB42), this protein is 3-isopropylmalate dehydratase large subunit.